A 509-amino-acid polypeptide reads, in one-letter code: Glycogen synthase (509 aa).

Lys47 contributes to the ADP-alpha-D-glucose binding site.

Belongs to the glycosyltransferase 1 family. Bacterial/plant glycogen synthase subfamily.

It catalyses the reaction [(1-&gt;4)-alpha-D-glucosyl](n) + ADP-alpha-D-glucose = [(1-&gt;4)-alpha-D-glucosyl](n+1) + ADP + H(+). It participates in glycan biosynthesis; glycogen biosynthesis. Synthesizes alpha-1,4-glucan chains using ADP-glucose. The polypeptide is Glycogen synthase (Xanthomonas euvesicatoria pv. vesicatoria (strain 85-10) (Xanthomonas campestris pv. vesicatoria)).